Reading from the N-terminus, the 136-residue chain is Phospholipase A2 (136 aa).

Positions 8, 10, and 12 each coordinate Ca(2+). Cystine bridges form between Cys9-Cys31, Cys30-Cys70, Cys37-Cys63, Cys61-Cys95, and Cys105-Cys117. The N-linked (GlcNAc...) asparagine glycan is linked to Asn16. Residue His34 is part of the active site. Ca(2+) is bound at residue Asp35. Asp64 is a catalytic residue.

Belongs to the phospholipase A2 family. The cofactor is Ca(2+). As to expression, expressed by the venom gland.

It is found in the secreted. It catalyses the reaction a 1,2-diacyl-sn-glycero-3-phosphocholine + H2O = a 1-acyl-sn-glycero-3-phosphocholine + a fatty acid + H(+). PLA2 catalyzes the calcium-dependent hydrolysis of the 2-acyl groups in 3-sn-phosphoglycerides. The protein is Phospholipase A2 of Bombus terrestris (Buff-tailed bumblebee).